Consider the following 141-residue polypeptide: HTH-type transcriptional regulator LrpA (141 aa).

The HTH asnC-type domain maps to 2 to 63 (IDERDKIILE…RINPKKLGYS (62 aa)). A DNA-binding region (H-T-H motif) is located at residues 21–40 (FTEIAKKLGISETAVRKRVK).

In terms of assembly, homooctamer; tetramer of dimers.

In terms of biological role, DNA-binding protein that negatively regulates its own transcription. Interferes with RNA polymerase (RNAP) recruitment by inhibiting the association of RNAP with the TBP-TFB promoter complex. This chain is HTH-type transcriptional regulator LrpA (lrpA), found in Pyrococcus horikoshii (strain ATCC 700860 / DSM 12428 / JCM 9974 / NBRC 100139 / OT-3).